The chain runs to 1072 residues: MGIPAAFRWLSTKYPKIISPVIEDQPITMPDGTVIPVDATKPNPNGEEFDNLYLDMNGIVHPCSHPEDRPAPKDEEEMMVEVFKYTDRVVNMVRPRKLLMIAVDGVAPRAKMNQQRSRRFRAAREAMEKEEDKQKFVELLKKQNGKPQEEEPVEVVVKKAFDSNSITPGTPFMDILAASLRYWCSYKLNTDPAWANIKVIISDATVPGEGEHKIMEFVRSQRGSPNHDPNTRHVIYGLDADLIMLGLATHEPHFRVLREDVFAQDSRPRLCKICGQKGHDAMNCKGEAKEKNGEFDEKDAVVPLKPFIWLHVSILREYLAIELDVPGLPFQFNLERAIDDWVFMCFFVGNDFLPHLPALEIRENGIDTLTAIWKDNLPVMGGYLTKDGHADLERVQYIMAGLAKQEDAIFRRRKETEDRREAGFKRRKLADEARQRRAQGSRQIRQAAENSGPPAGFSFHKINEFPGKAPQPSITHDMVVNRQAVDQANVANKSAASVLKDQIKSMMAQGTSTPENGAESTETPAETAAAAPATEEQAAPPAALGKRKAELIEDAVAGPEASSTEVTEISESDAEPTDSVRLWEEGYADRYYEQKFKVDRKDIDFRHKVGRAYAEGLAWVLEYYFQGCPSWEWFYPYHYAPFAADFVDLGKMEIKFEKGRISRPFEQLMSVLPAASRHAIPEVFHSLMLEETSEIRHFYPDDFEIDLNGKKMAWQGVALLPFIDMPRLLAAMETKSHLLSPEDHLRNAPGKDYLLLSDSHPTLYDHITSQFYSKKQGTTKFELDPTKSAGLSGLVEKIDGYVPHGSLVYPLSRNSMPDVDYDRSLMVHYFFPDCSHTHKSMLLRGVQMPTPALTRSDIDILKGKASRSGRSYGGVPLSNKNYSGRNEPINYGPGGGQQGGRGRGGYQGGGGRGGGRGGYGGNGGGYQANGGGYYNGGNNGGGGGGYGGQPRDSYGPPPGWQPPPPPGLAGFGVGPPPPPPGAAYGGAPGGAGYGGYGSSRGGYQDNRYALPPPPPQAYQAQGQQYGQGGSRGGYQGQGNQYRGPPRQDRGYDNRGGYRGGGYRGGGDNRGYR.

Residues 118–144 (RRFRAAREAMEKEEDKQKFVELLKKQN) are a coiled coil. The segment at 269 to 286 (RLCKICGQKGHDAMNCKG) adopts a CCHC-type zinc-finger fold. Basic and acidic residues predominate over residues 414 to 435 (KETEDRREAGFKRRKLADEARQ). 4 disordered regions span residues 414-459 (KETE…GFSF), 509-577 (QGTS…AEPT), 865-911 (ASRS…GGGG), and 943-1072 (GGGY…RGYR). Residues 518–543 (AESTETPAETAAAAPATEEQAAPPAA) show a composition bias toward low complexity. Positions 892 to 911 (GPGGGQQGGRGRGGYQGGGG) are enriched in gly residues. The segment covering 955–967 (GPPPGWQPPPPPG) has biased composition (pro residues). Gly residues-rich tracts occupy residues 983–1000 (AYGG…GSSR), 1025–1036 (YGQGGSRGGYQG), and 1056–1072 (GYRG…RGYR).

Belongs to the 5'-3' exonuclease family. XRN2/RAT1 subfamily. Interacts with rai1; the interaction is direct, stabilizes exr-1 protein structure and may stimulate its exoribonuclease activity. The interaction also stimulates rai1 pyrophosphohydrolase activity, probably by recruiting it to mRNA substrates.

The protein resides in the nucleus. In terms of biological role, possesses 5'-&gt;3' exoribonuclease activity. Required for the processing of nuclear mRNA and rRNA precursors. May promote the termination of transcription by RNA polymerase II. Essential for vegetative cell growth and chromosome segregation. The sequence is that of 5'-3' exoribonuclease 2 (exr-1) from Neurospora crassa (strain ATCC 24698 / 74-OR23-1A / CBS 708.71 / DSM 1257 / FGSC 987).